We begin with the raw amino-acid sequence, 277 residues long: Large ribosomal subunit protein uL2 (277 aa).

The tract at residues 222–277 (GSVMNPNDHPHGGGEGKAPVGRKAPSTPWGKPALGLKTRNKKAKSDKLIVRRRNQK) is disordered.

Belongs to the universal ribosomal protein uL2 family. As to quaternary structure, part of the 50S ribosomal subunit. Forms a bridge to the 30S subunit in the 70S ribosome.

In terms of biological role, one of the primary rRNA binding proteins. Required for association of the 30S and 50S subunits to form the 70S ribosome, for tRNA binding and peptide bond formation. It has been suggested to have peptidyltransferase activity; this is somewhat controversial. Makes several contacts with the 16S rRNA in the 70S ribosome. The polypeptide is Large ribosomal subunit protein uL2 (Streptococcus agalactiae serotype Ia (strain ATCC 27591 / A909 / CDC SS700)).